The chain runs to 711 residues: Ribosomal RNA large subunit methyltransferase K/L (711 aa).

A THUMP domain is found at 43 to 154; the sequence is TLYRTLLWSR…RENLVISLDL (112 aa).

Belongs to the methyltransferase superfamily. RlmKL family.

The protein localises to the cytoplasm. The catalysed reaction is guanosine(2445) in 23S rRNA + S-adenosyl-L-methionine = N(2)-methylguanosine(2445) in 23S rRNA + S-adenosyl-L-homocysteine + H(+). The enzyme catalyses guanosine(2069) in 23S rRNA + S-adenosyl-L-methionine = N(2)-methylguanosine(2069) in 23S rRNA + S-adenosyl-L-homocysteine + H(+). Its function is as follows. Specifically methylates the guanine in position 2445 (m2G2445) and the guanine in position 2069 (m7G2069) of 23S rRNA. The protein is Ribosomal RNA large subunit methyltransferase K/L of Haemophilus influenzae (strain PittEE).